The primary structure comprises 785 residues: Putative endonuclease MutS2 (785 aa).

Position 335–342 (335–342 (GPNTGGKT)) interacts with ATP. Positions 513-586 (TAEHNEVDTM…AEKVKAAMKE (74 aa)) form a coiled coil. Positions 636–785 (KRDFKPGDEV…GSGVTVVELK (150 aa)) are partially complements a deletion for mitomycin C (MMC) resistance and for chromosomal DNA transformation. Residues 641 to 681 (PGDEVKVLTFGQKGTLLEKTGGNEWNVQIGILKMKVKEKDL) form a KOW region region. The Smr domain occupies 710–785 (LDLRGERYEN…GSGVTVVELK (76 aa)).

It belongs to the DNA mismatch repair MutS family. MutS2 subfamily. As to quaternary structure, binds to ribosomes as a homodimer. Binds to stalled/collided disomes, association is greater in (ribosome-targeted) antibiotic-treated cells (with increased stalling at specific mRNA sites). The clamp domain of one monomer binds the A-site finger, the 23S rRNA of the central protuberance and ribosomal protein uL5 of the leading (stalled) ribosome, while the other monomer binds in a gap between the ribosomal central protuberance and the L1 stalk of the leading ribosome.

The protein localises to the cytoplasm. Acts as a ribosome collision sensor splitting the ribosome into its 2 subunits. Detects stalled/collided disomes (pairs of ribosomes where the leading ribosome is stalled and a second ribosome has collided with it) which it binds and splits, by an ATP-hydrolysis driven conformational change. Does not seem to have endoribonuclease activity (in the context of ribosome stalling). Acts upstream of the ribosome quality control system (RQC), a ribosome-associated complex that mediates the extraction of incompletely synthesized nascent chains from stalled ribosomes and their subsequent degradation, probably generates substrates for RQC. Its function is as follows. Does not seem to be involved in mismatch repair or in the prevention of interspecific recombination during DNA transformation. Might be involved in homologous recombination. Putative endonuclease that may be involved in the suppression of homologous recombination and may therefore have a key role in the control of bacterial genetic diversity. The protein is Putative endonuclease MutS2 of Bacillus subtilis (strain 168).